A 152-amino-acid chain; its full sequence is Superoxide dismutase [Cu-Zn] (152 aa).

Cu cation contacts are provided by His45, His47, and His62. Cys56 and Cys145 are disulfide-bonded. 4 residues coordinate Zn(2+): His62, His70, His79, and Asp82. Residue His119 coordinates Cu cation.

Belongs to the Cu-Zn superoxide dismutase family. Homodimer. It depends on Cu cation as a cofactor. Zn(2+) is required as a cofactor.

The protein localises to the cytoplasm. The enzyme catalyses 2 superoxide + 2 H(+) = H2O2 + O2. Functionally, destroys radicals which are normally produced within the cells and which are toxic to biological systems. The polypeptide is Superoxide dismutase [Cu-Zn] (SODCC) (Capsicum annuum (Capsicum pepper)).